Consider the following 131-residue polypeptide: MKKHGVLNSEIAAVLASLGHTDTIVIADCGLPIPDGVKRIDLAVEIGKPSFLDVLQVVADDMAIEKVTLAEEVINNNAEVNKEIELKLIEPAFEYVCHEQFKEHTKKAKAIIRTGEATPYANVILHAGVIF.

The active-site Proton donor is His20. Substrate contacts are provided by residues Asp28, His98, and 120-122; that span reads YAN.

Belongs to the RbsD / FucU family. RbsD subfamily. As to quaternary structure, homodecamer.

It is found in the cytoplasm. The catalysed reaction is beta-D-ribopyranose = beta-D-ribofuranose. The protein operates within carbohydrate metabolism; D-ribose degradation; D-ribose 5-phosphate from beta-D-ribopyranose: step 1/2. Catalyzes the interconversion of beta-pyran and beta-furan forms of D-ribose. This is D-ribose pyranase from Bacillus anthracis (strain A0248).